Here is a 1323-residue protein sequence, read N- to C-terminus: Traf2 and NCK-interacting protein kinase (1323 aa).

Residues 25 to 289 (FELVELVGNG…TEQLMKHPFI (265 aa)) enclose the Protein kinase domain. Residues 31 to 39 (VGNGTYGQV) and lysine 54 contribute to the ATP site. Residue aspartate 153 is the Proton acceptor of the active site. A Phosphothreonine modification is found at threonine 187. 3 disordered regions span residues 284 to 347 (MKHP…LPGE), 397 to 559 (EQKE…LRPV), and 571 to 838 (SQGP…NEQY). The span at 288–307 (FIRDQPNERQVRIQLKDHID) shows a compositional bias: basic and acidic residues. A mediates interaction with NEDD4 region spans residues 290-1010 (RDQPNERQVR…EIRKYKKRFN (721 aa)). Acidic residues predominate over residues 317–335 (DETEYEYSGSEEEEEENDS). Serine 324 and serine 326 each carry phosphoserine. Composition is skewed to basic and acidic residues over residues 397–470 (EQKE…ERDY), 477–494 (QRQE…HYKE), and 503–513 (AWAKEVEERSR). Residues serine 531 and serine 541 each carry the phosphoserine modification. The residue at position 552 (threonine 552) is a Phosphothreonine. Phosphoserine is present on residues serine 571, serine 579, serine 581, and serine 611. Over residues 623–640 (RIEKFDRSSWLRQEEDIP) the composition is skewed to basic and acidic residues. Residues serine 649, serine 651, serine 659, serine 672, serine 678, serine 691, serine 735, serine 737, and serine 740 each carry the phosphoserine modification. A compositionally biased stretch (low complexity) spans 691–726 (SSLQRTSSGSSSSSSTPSSQPSSQGGSQPGSQAGSS). 2 stretches are compositionally biased toward basic and acidic residues: residues 746-760 (EPSK…DITR) and 772-790 (KELR…KKVT). Acidic residues predominate over residues 797–810 (EESESSEEEEEDGE). Residue serine 922 is modified to Phosphoserine. Residues 939-960 (FVDPRVYQTSPTDEDEEDDESS) are disordered. Positions 950–959 (TDEDEEDDES) are enriched in acidic residues. Positions 1010 to 1297 (NSEILCAALW…KFLCERNDKV (288 aa)) constitute a CNH domain.

This sequence belongs to the protein kinase superfamily. STE Ser/Thr protein kinase family. STE20 subfamily. In terms of assembly, interacts (via the CNH domain) with RAP2A (GTP-bound form preferentially); the interaction is direct and required for the activation of TNIK by RAP2A. Interacts with NEDD4; recruits RAP2A to NEDD4. Interacts with TRAF2 and NCK. Interacts with TCF7L2/TCF4 and CTNNB1; the interaction is direct. Interacts with TANC1. In terms of processing, autophosphorylated. Autophosphorylation is activated by RAP2A and induces association to the cytoskeletal fraction.

The protein localises to the nucleus. It is found in the cytoplasm. Its subcellular location is the recycling endosome. It localises to the cytoskeleton. The enzyme catalyses L-seryl-[protein] + ATP = O-phospho-L-seryl-[protein] + ADP + H(+). It carries out the reaction L-threonyl-[protein] + ATP = O-phospho-L-threonyl-[protein] + ADP + H(+). Its function is as follows. Serine/threonine kinase that acts as an essential activator of the Wnt signaling pathway. Recruited to promoters of Wnt target genes and required to activate their expression. May act by phosphorylating TCF4/TCF7L2. Appears to act upstream of the JUN N-terminal pathway. May play a role in the response to environmental stress. Part of a signaling complex composed of NEDD4, RAP2A and TNIK which regulates neuronal dendrite extension and arborization during development. More generally, it may play a role in cytoskeletal rearrangements and regulate cell spreading. Phosphorylates SMAD1 on Thr-322. Activator of the Hippo signaling pathway which plays a pivotal role in organ size control and tumor suppression by restricting proliferation and promoting apoptosis. MAP4Ks act in parallel to and are partially redundant with STK3/MST2 and STK4/MST2 in the phosphorylation and activation of LATS1/2, and establish MAP4Ks as components of the expanded Hippo pathway. The polypeptide is Traf2 and NCK-interacting protein kinase (Tnik) (Mus musculus (Mouse)).